Consider the following 694-residue polypeptide: Elongation factor G (694 aa).

Positions 8–282 (DRLRNIGIMA…AIVDYLPSPL (275 aa)) constitute a tr-type G domain. Residues 17–24 (AHIDAGKT), 81–85 (DTPGH), and 135–138 (NKMD) contribute to the GTP site. The disordered stretch occupies residues 284 to 303 (IPPVQGTDPETGEPAERKAD).

This sequence belongs to the TRAFAC class translation factor GTPase superfamily. Classic translation factor GTPase family. EF-G/EF-2 subfamily.

The protein localises to the cytoplasm. Catalyzes the GTP-dependent ribosomal translocation step during translation elongation. During this step, the ribosome changes from the pre-translocational (PRE) to the post-translocational (POST) state as the newly formed A-site-bound peptidyl-tRNA and P-site-bound deacylated tRNA move to the P and E sites, respectively. Catalyzes the coordinated movement of the two tRNA molecules, the mRNA and conformational changes in the ribosome. The protein is Elongation factor G of Symbiobacterium thermophilum (strain DSM 24528 / JCM 14929 / IAM 14863 / T).